Consider the following 525-residue polypeptide: Patatin-like protein 8 (525 aa).

Positions 1-50 (MNRRYEKPPPLSVSSKGKKKHFVNHTAPNTPGNYERTQTSPTLSTARSHE) are disordered. Over residues 26-46 (TAPNTPGNYERTQTSPTLSTA) the composition is skewed to polar residues. The region spanning 124–338 (LSIDGGGMRG…AMSNPTAAAI (215 aa)) is the PNPLA domain. The GXGXXG signature appears at 128–133 (GGGMRG). The active-site Nucleophile is the Ser168.

This sequence belongs to the patatin family. In terms of tissue distribution, specifically expressed in roots.

Functionally, possesses non-specific lipolytic acyl hydrolase (LAH) activity. Hydrolyzes phospholipids as well as galactolipids. May play a role in disease resistance. This is Patatin-like protein 8 (PLP8) from Arabidopsis thaliana (Mouse-ear cress).